A 194-amino-acid polypeptide reads, in one-letter code: MTPRGTAEPQVRPGIAEDLTGLTNLYNHYVLRTPITFDTVPLTPEGRMQWFLSHPKDGPHRLMVAAEPAPSGPERLLGYATSSPLRPKAAYATSAEVSVYCAPDAAGRGVGTALYTALFDALAGEDLHRAYAGVTQPNDASHRLHTRFDFRPIGTYGQVGRKFGRYWDVRWYEKELGGGGADGGAGRLHQTGRM.

Residues Pro9–Glu173 enclose the N-acetyltransferase domain.

It belongs to the acetyltransferase family. PAT/BAR subfamily.

The protein is N-acetyltransferase (nat) of Streptomyces griseus.